The sequence spans 362 residues: Trans-enoyl reductase phm4 (362 aa).

50–53 lines the NADP(+) pocket; that stretch reads VDAK. 136-143 lines the substrate pocket; it reads TCFMTCGL. Residues 171 to 174, 194 to 197, tyrosine 212, and 259 to 260 each bind NADP(+); these read ATAT, SPHS, and LD. Residue 280–284 coordinates substrate; the sequence is GPIML. 349–350 lines the NADP(+) pocket; the sequence is VN.

Belongs to the zinc-containing alcohol dehydrogenase family. Monomer.

It functions in the pathway secondary metabolite biosynthesis. In terms of biological role, trans-enoyl reductase; part of the gene cluster that mediates the biosynthesis of the trans-fused decalin-containing tetramic acid phomasetin, the stereochemical opposite of the HIV-1 integrase inhibitor equisetin. The PKS module of phm1 together with the enoylreductase phm4 catalyze the formation of the polyketide unit which is then conjugated to L-serine by the condensation domain of the phm1 NRPS module. Activity of the Dieckmann cyclase domain (RED) of phm1 results in release of the Dieckmann product intermediate. The Diels-Alderase phm7 then uses the Dieckmann product of phm1 as substrate and catalyzes the Diels-Alder cycloaddition to form the decalin ring of N-desmethylphomasetin. N-desmethylphomasetin is further methylated to phomasetin by the methyltransferase phm5. This chain is Trans-enoyl reductase phm4, found in Pyrenochaetopsis sp.